The primary structure comprises 268 residues: MPSGKPSSVFPLHPKPTPLKPSSSTSSSNNNSTNQACAACKYQRRKCAPDCLLAPYFPHDRHRQFLNAHKLFGVSNITKIIKSLTPPEKDAAMHTIMFQSDARANDPVDGCYGIIKKLQYQIEYTRNELEIVLQQLAMFRDRAHQHHHQEPHIQMQEQEDLSSFSSSCDLNNNNSIPYNYPLNHIQEPNQQQYCSSGNNFSGLQEDMWCLQLQDSSTIVNMKAGFIDECEDVKPVEEVSSERHEFEPHEAFVEQRKLDLPSAQYIISS.

Residues 1 to 31 (MPSGKPSSVFPLHPKPTPLKPSSSTSSSNNN) are disordered. Over residues 22–31 (SSSTSSSNNN) the composition is skewed to low complexity. The LOB domain occupies 35 to 136 (QACAACKYQR…NELEIVLQQL (102 aa)).

The protein belongs to the LOB domain-containing protein family.

The protein is LOB domain-containing protein 22 (LBD22) of Arabidopsis thaliana (Mouse-ear cress).